The primary structure comprises 352 residues: Phenylalanine--tRNA ligase alpha subunit (352 aa).

Residue E258 participates in Mg(2+) binding.

The protein belongs to the class-II aminoacyl-tRNA synthetase family. Phe-tRNA synthetase alpha subunit type 1 subfamily. As to quaternary structure, tetramer of two alpha and two beta subunits. Mg(2+) is required as a cofactor.

The protein resides in the cytoplasm. The enzyme catalyses tRNA(Phe) + L-phenylalanine + ATP = L-phenylalanyl-tRNA(Phe) + AMP + diphosphate + H(+). The protein is Phenylalanine--tRNA ligase alpha subunit of Staphylococcus saprophyticus subsp. saprophyticus (strain ATCC 15305 / DSM 20229 / NCIMB 8711 / NCTC 7292 / S-41).